Reading from the N-terminus, the 447-residue chain is Dirigent protein 10 (447 aa).

The first 21 residues, 1–21 (MAGQKILSLLVIALVVTFAAA), serve as a signal peptide directing secretion. Residues 74-85 (SGSTGSGLGAGT) show a composition bias toward gly residues. The interval 74 to 123 (SGSTGSGLGAGTGSIPSSGSGPGLLPTASSVPGSLAGGGSGSLPTTGSAT) is disordered. Residues 86–107 (GSIPSSGSGPGLLPTASSVPGS) are compositionally biased toward low complexity.

Belongs to the plant dirigent protein family. Homodimer. In roots, mostly detected in root endodermis and quiescent center, and, to a lower extent, in root stele and cortex. Expressed in root vascular cylinder, flowers, siliques, cotyledon and leaf veins, and leaf margins. Present in the basal region of rosette leaf trichomes and in developing xylem.

It localises to the secreted. The protein resides in the extracellular space. Its subcellular location is the apoplast. Dirigent proteins impart stereoselectivity on the phenoxy radical-coupling reaction, yielding optically active lignans from two molecules of coniferyl alcohol in the biosynthesis of lignans, flavonolignans, and alkaloids and thus plays a central role in plant secondary metabolism. Regulates suberin accumulation in roots. This Arabidopsis thaliana (Mouse-ear cress) protein is Dirigent protein 10 (DIR10).